We begin with the raw amino-acid sequence, 270 residues long: Putative phosphoenolpyruvate synthase regulatory protein (270 aa).

An ADP-binding site is contributed by glycine 150–threonine 157.

This sequence belongs to the pyruvate, phosphate/water dikinase regulatory protein family. PSRP subfamily.

It carries out the reaction [pyruvate, water dikinase] + ADP = [pyruvate, water dikinase]-phosphate + AMP + H(+). The catalysed reaction is [pyruvate, water dikinase]-phosphate + phosphate + H(+) = [pyruvate, water dikinase] + diphosphate. Bifunctional serine/threonine kinase and phosphorylase involved in the regulation of the phosphoenolpyruvate synthase (PEPS) by catalyzing its phosphorylation/dephosphorylation. This is Putative phosphoenolpyruvate synthase regulatory protein from Cupriavidus metallidurans (strain ATCC 43123 / DSM 2839 / NBRC 102507 / CH34) (Ralstonia metallidurans).